The sequence spans 466 residues: Adenosylhomocysteinase (466 aa).

3 residues coordinate substrate: Thr-57, Asp-132, and Glu-192. Residue 193–195 (TTT) participates in NAD(+) binding. Positions 222 and 226 each coordinate substrate. Residues Asn-227, 256-261 (GYGDVG), Glu-279, Asn-314, 335-337 (IGH), and Asn-380 each bind NAD(+).

Belongs to the adenosylhomocysteinase family. NAD(+) is required as a cofactor.

Its subcellular location is the cytoplasm. It catalyses the reaction S-adenosyl-L-homocysteine + H2O = L-homocysteine + adenosine. The protein operates within amino-acid biosynthesis; L-homocysteine biosynthesis; L-homocysteine from S-adenosyl-L-homocysteine: step 1/1. May play a key role in the regulation of the intracellular concentration of adenosylhomocysteine. The sequence is that of Adenosylhomocysteinase from Sinorhizobium medicae (strain WSM419) (Ensifer medicae).